We begin with the raw amino-acid sequence, 343 residues long: Dual-specificity RNA methyltransferase RlmN (343 aa).

E92 serves as the catalytic Proton acceptor. The Radical SAM core domain maps to 98 to 325 (DEDRTTLCIS…VITRSSRGSD (228 aa)). An intrachain disulfide couples C105 to C330. The [4Fe-4S] cluster site is built by C112, C116, and C119. S-adenosyl-L-methionine is bound by residues 157–158 (GE), S189, 211–213 (SLN), and N287. The active-site S-methylcysteine intermediate is the C330.

The protein belongs to the radical SAM superfamily. RlmN family. [4Fe-4S] cluster serves as cofactor.

The protein resides in the cytoplasm. The enzyme catalyses adenosine(2503) in 23S rRNA + 2 reduced [2Fe-2S]-[ferredoxin] + 2 S-adenosyl-L-methionine = 2-methyladenosine(2503) in 23S rRNA + 5'-deoxyadenosine + L-methionine + 2 oxidized [2Fe-2S]-[ferredoxin] + S-adenosyl-L-homocysteine. It carries out the reaction adenosine(37) in tRNA + 2 reduced [2Fe-2S]-[ferredoxin] + 2 S-adenosyl-L-methionine = 2-methyladenosine(37) in tRNA + 5'-deoxyadenosine + L-methionine + 2 oxidized [2Fe-2S]-[ferredoxin] + S-adenosyl-L-homocysteine. Functionally, specifically methylates position 2 of adenine 2503 in 23S rRNA and position 2 of adenine 37 in tRNAs. m2A2503 modification seems to play a crucial role in the proofreading step occurring at the peptidyl transferase center and thus would serve to optimize ribosomal fidelity. In Geotalea uraniireducens (strain Rf4) (Geobacter uraniireducens), this protein is Dual-specificity RNA methyltransferase RlmN.